Consider the following 304-residue polypeptide: Quinolinate synthase (304 aa).

His-23 and Ser-40 together coordinate iminosuccinate. Cys-85 is a [4Fe-4S] cluster binding site. Residues Tyr-111–Asn-113 and Ser-128 each bind iminosuccinate. Cys-171 serves as a coordination point for [4Fe-4S] cluster. Residues His-197–Glu-199 and Thr-214 each bind iminosuccinate. Cys-259 is a binding site for [4Fe-4S] cluster.

It belongs to the quinolinate synthase family. Type 2 subfamily. [4Fe-4S] cluster serves as cofactor.

The protein resides in the cytoplasm. The catalysed reaction is iminosuccinate + dihydroxyacetone phosphate = quinolinate + phosphate + 2 H2O + H(+). Its pathway is cofactor biosynthesis; NAD(+) biosynthesis; quinolinate from iminoaspartate: step 1/1. Functionally, catalyzes the condensation of iminoaspartate with dihydroxyacetone phosphate to form quinolinate. The sequence is that of Quinolinate synthase from Pelobacter propionicus (strain DSM 2379 / NBRC 103807 / OttBd1).